The following is a 266-amino-acid chain: Undecaprenyl-diphosphatase (266 aa).

The next 7 helical transmembrane spans lie at 39–59 (PGSS…VWYF), 86–106 (SIFI…LFVP), 112–132 (VLRS…FMYL), 153–173 (LIGF…GITI), 189–209 (FSFL…FIFS), 216–236 (IGFL…LLAI), and 246–266 (NGLK…LLNL).

It belongs to the UppP family.

It is found in the cell inner membrane. It catalyses the reaction di-trans,octa-cis-undecaprenyl diphosphate + H2O = di-trans,octa-cis-undecaprenyl phosphate + phosphate + H(+). In terms of biological role, catalyzes the dephosphorylation of undecaprenyl diphosphate (UPP). Confers resistance to bacitracin. This Prochlorococcus marinus (strain MIT 9215) protein is Undecaprenyl-diphosphatase.